The chain runs to 105 residues: Larval cuticle protein 65Ag1 (105 aa).

Positions 1 to 18 (MKFLIVFVALFAVALAAP) are cleaved as a signal peptide. A Chitin-binding type R&amp;R domain is found at 34–103 (PESFKYDWET…PQGAHLPVAP (70 aa)).

Functionally, component of the cuticle of the larva. This Drosophila melanogaster (Fruit fly) protein is Larval cuticle protein 65Ag1.